The following is a 481-amino-acid chain: Protein hedgehog (481 aa).

Cys-93 carries N-palmitoyl cysteine lipidation. Glu-157, Glu-158, Asp-163, Thr-193, Glu-194, Asp-197, and Asp-199 together coordinate Ca(2+). Gly-265 carries Cholesterol glycine ester lipidation.

Belongs to the hedgehog family. As to quaternary structure, interacts with shf. In terms of processing, the C-terminal part of the hedgehog protein precursor displays an autoproteolysis activity that results in the cleavage of the full-length protein into two parts (N-product and C-product). In addition, the C-terminal part displays a cholesterol transferase activity that results by the covalent attachment of a cholesterol moiety to the C-terminal of the newly generated N-product. The N-product is the active species in both local and long-range signaling, whereas the C-product has no signaling activity. Cholesterylation is required for N-product targeting to lipid rafts and multimerization. Post-translationally, N-palmitoylation by Rasp of the hedgehog N-product, within the secretory pathway, is required for the embryonic and larval patterning activities of the hedgehog signal.

It localises to the nucleus. The protein resides in the cytoplasm. It is found in the cell membrane. It catalyses the reaction glycyl-L-cysteinyl-[protein] + cholesterol + H(+) = [protein]-C-terminal glycyl cholesterol ester + N-terminal L-cysteinyl-[protein]. Functionally, the C-terminal part of the hedgehog protein precursor displays an autoproteolysis activity that results in the cleavage of the full-length protein into two parts (N-product and C-product). In addition, the C-terminal part displays a cholesterol transferase activity that results by the covalent attachment of a cholesterol moiety to the C-terminal of the newly generated N-product. Once cleaved, the C-product has no signaling activity and diffuses from the cell. The dually lipidated hedgehog protein N-product is a morphogen which is essential for a variety of patterning events during development. Establishes the anterior-posterior axis of the embryonic segments and patterns the larval imaginal disks. Binds to the patched (ptc) receptor, which functions in association with smoothened (smo), to activate the transcription of target genes wingless (wg), decapentaplegic (dpp) and ptc. In the absence of hh, ptc represses the constitutive signaling activity of smo through fused (fu). Essential component of a signaling pathway which regulates the Duox-dependent gut immune response to bacterial uracil; required to activate Cad99C-dependent endosome formation, norpA-dependent Ca2+ mobilization and p38 MAPK, which are essential steps in the Duox-dependent production of reactive oxygen species (ROS) in response to intestinal bacterial infection. During photoreceptor differentiation, it up-regulates transcription of Ubr3, which in turn promotes the hh-signaling pathway by mediating the ubiquitination and degradation of cos. This chain is Protein hedgehog (hh-1), found in Drosophila pseudoobscura pseudoobscura (Fruit fly).